We begin with the raw amino-acid sequence, 596 residues long: Transcription factor IIIB 70 kDa subunit (596 aa).

Residues 1 to 33 (MPVCKNCHGTEFERDLSNANNDLVCKACGVVSE) form a TFIIB-type zinc finger. Zn(2+)-binding residues include cysteine 4, cysteine 7, cysteine 25, and cysteine 28. 2 consecutive repeat copies span residues 90-166 (VSYA…KMVK) and 185-264 (FAEK…EFKN). 2 disordered regions span residues 363–421 (GENI…NESG) and 509–534 (IATGNTSVKKKRTRRRNNTRSDEPTK). The span at 365 to 375 (NIYHEGSENET) shows a compositional bias: basic and acidic residues. Serine 381 and serine 384 each carry phosphoserine. Residues 388–421 (EHVEGEDKETEGTEEKVKKVKTKTSEEKKENESG) show a composition bias toward basic and acidic residues. Positions 516–526 (VKKKRTRRRNN) are enriched in basic residues.

Belongs to the TFIIB family. In terms of assembly, TFIIIB comprises the TATA-binding protein (TBP), the B-related factor (BRF) and the B' component (TFC5).

Its subcellular location is the nucleus. Its function is as follows. General activator of RNA polymerase III transcription. Interacts with TBP. Binds to Pol III subunit C34 and to the TAU135 component of TFIIIC. This chain is Transcription factor IIIB 70 kDa subunit (BRF1), found in Saccharomyces cerevisiae (strain ATCC 204508 / S288c) (Baker's yeast).